A 340-amino-acid chain; its full sequence is Probable HTH-type transcriptional regulator EndR (340 aa).

The HTH lacI-type domain maps to 1–58 (MVTTMKEVAERAGVSKSTVSQFLQKRYNYMSENTKKKIEQAIEDLSYIPNEVARSLKQ). Residues 5–24 (MKEVAERAGVSKSTVSQFLQ) constitute a DNA-binding region (H-T-H motif).

In terms of biological role, putative repressor of the endoglucanase operon. The polypeptide is Probable HTH-type transcriptional regulator EndR (endR) (Paenibacillus polymyxa (Bacillus polymyxa)).